A 570-amino-acid chain; its full sequence is GTPase Obg (570 aa).

An Obg domain is found at 2–168; sequence SDFVDRVTVH…RDIILELKSI (167 aa). A disordered region spans residues 15–43; the sequence is GDGGNGSAGIRREKYKPLAGPNGGNGGKG. The OBG-type G domain occupies 169-349; it reads ADVALVGFPS…LNFALAKLVK (181 aa). GTP is bound by residues 175 to 182, 200 to 204, 221 to 224, 301 to 304, and 330 to 332; these read GFPSAGKS, FTTLV, DVPG, NKID, and STA. Residues S182 and T202 each coordinate Mg(2+). The OCT domain occupies 382 to 468; sequence GRNAQVREFE…ERAVAFDWDP (87 aa). Positions 521–570 are disordered; sequence RAAMQAERAAGHWADPSIDDDRHDEQSLFGRGEVEEYEDEPGADGSRQLD.

It belongs to the TRAFAC class OBG-HflX-like GTPase superfamily. OBG GTPase family. As to quaternary structure, monomer. Mg(2+) is required as a cofactor.

It localises to the cytoplasm. An essential GTPase which binds GTP, GDP and possibly (p)ppGpp with moderate affinity, with high nucleotide exchange rates and a fairly low GTP hydrolysis rate. Plays a role in control of the cell cycle, stress response, ribosome biogenesis and in those bacteria that undergo differentiation, in morphogenesis control. This chain is GTPase Obg, found in Bifidobacterium animalis subsp. lactis (strain AD011).